The primary structure comprises 160 residues: SsrA-binding protein (160 aa).

This sequence belongs to the SmpB family.

It is found in the cytoplasm. Functionally, required for rescue of stalled ribosomes mediated by trans-translation. Binds to transfer-messenger RNA (tmRNA), required for stable association of tmRNA with ribosomes. tmRNA and SmpB together mimic tRNA shape, replacing the anticodon stem-loop with SmpB. tmRNA is encoded by the ssrA gene; the 2 termini fold to resemble tRNA(Ala) and it encodes a 'tag peptide', a short internal open reading frame. During trans-translation Ala-aminoacylated tmRNA acts like a tRNA, entering the A-site of stalled ribosomes, displacing the stalled mRNA. The ribosome then switches to translate the ORF on the tmRNA; the nascent peptide is terminated with the 'tag peptide' encoded by the tmRNA and targeted for degradation. The ribosome is freed to recommence translation, which seems to be the essential function of trans-translation. The chain is SsrA-binding protein from Mannheimia succiniciproducens (strain KCTC 0769BP / MBEL55E).